A 599-amino-acid chain; its full sequence is Afamin (599 aa).

The N-terminal stretch at 1 to 21 is a signal peptide; the sequence is MKLLKLTGFIFFLFFLTESLT. Albumin domains are found at residues 22 to 210, 211 to 403, and 404 to 599; these read LPTQ…IPVT, QYLK…KFNE, and TTEK…KIGN. Asn33 carries N-linked (GlcNAc...) (complex) asparagine glycosylation. Disulfide bonds link Cys77-Cys86, Cys99-Cys114, Cys113-Cys124, Cys148-Cys193, Cys192-Cys201, Cys224-Cys270, Cys269-Cys277, Cys289-Cys303, Cys302-Cys313, Cys340-Cys385, and Cys384-Cys393. Asn109 is a glycosylation site (N-linked (GlcNAc...) (complex) asparagine). The interval 215-319 is binding pocket for hydrophobic ligands; that stretch reads AFSSYQKHVC…RGQCIINSNK (105 aa). The N-linked (GlcNAc...) (complex) asparagine; atypical glycan is linked to Asn383. Asn402 is a glycosylation site (N-linked (GlcNAc...) (complex) asparagine). 6 disulfides stabilise this stretch: Cys416–Cys462, Cys461–Cys470, Cys483–Cys499, Cys498–Cys509, Cys536–Cys581, and Cys580–Cys589. N-linked (GlcNAc...) asparagine glycosylation occurs at Asn488.

The protein belongs to the ALB/AFP/VDB family. In terms of assembly, forms a 1:1 complex with Wnt family members; interacts with WNT1, WNT2B, WNT3, WNT3A, WNT5A, WNT7A, WNT7B, WNT8, WNT9A, WNT9B, WNT10A and WNT10B. Post-translationally, N-glycosylated; more than 90% of the glycans are sialylated. As to expression, high level detected in plasma but also in extravascular fluids such as follicular and cerebrospinal fluids (at protein level).

The protein localises to the secreted. Its function is as follows. Functions as a carrier for hydrophobic molecules in body fluids. Essential for the solubility and activity of lipidated Wnt family members, including WNT1, WNT2B, WNT3, WNT3A, WNT5A, WNT7A, WNT7B, WNT8, WNT9A, WNT9B, WNT10A and WNT10B. Binds vitamin E. May transport vitamin E in body fluids under conditions where the lipoprotein system is not sufficient. May be involved in the transport of vitamin E across the blood-brain barrier. This Homo sapiens (Human) protein is Afamin (AFM).